A 168-amino-acid chain; its full sequence is 2-C-methyl-D-erythritol 2,4-cyclodiphosphate synthase (168 aa).

2 residues coordinate a divalent metal cation: Asp8 and His10. Residues 8–10 (DLH) and 34–35 (HS) each bind 4-CDP-2-C-methyl-D-erythritol 2-phosphate. His42 contacts a divalent metal cation. Residues 56 to 58 (DIG), 61 to 65 (FPDTD), 132 to 135 (TTTE), and Arg142 each bind 4-CDP-2-C-methyl-D-erythritol 2-phosphate.

It belongs to the IspF family. Homotrimer. A divalent metal cation serves as cofactor.

The catalysed reaction is 4-CDP-2-C-methyl-D-erythritol 2-phosphate = 2-C-methyl-D-erythritol 2,4-cyclic diphosphate + CMP. The protein operates within isoprenoid biosynthesis; isopentenyl diphosphate biosynthesis via DXP pathway; isopentenyl diphosphate from 1-deoxy-D-xylulose 5-phosphate: step 4/6. In terms of biological role, involved in the biosynthesis of isopentenyl diphosphate (IPP) and dimethylallyl diphosphate (DMAPP), two major building blocks of isoprenoid compounds. Catalyzes the conversion of 4-diphosphocytidyl-2-C-methyl-D-erythritol 2-phosphate (CDP-ME2P) to 2-C-methyl-D-erythritol 2,4-cyclodiphosphate (ME-CPP) with a corresponding release of cytidine 5-monophosphate (CMP). The protein is 2-C-methyl-D-erythritol 2,4-cyclodiphosphate synthase of Desulfosudis oleivorans (strain DSM 6200 / JCM 39069 / Hxd3) (Desulfococcus oleovorans).